A 193-amino-acid polypeptide reads, in one-letter code: Rho-related protein racF2 (193 aa).

10 to 17 (GDGAVGKT) contacts GTP. Positions 32–40 (YLPTVFDNY) match the Effector region motif. GTP contacts are provided by residues 57–61 (DTAGQ) and 115–118 (TKQD). The residue at position 190 (C190) is a Cysteine methyl ester. C190 is lipidated: S-geranylgeranyl cysteine. The propeptide at 191–193 (TIM) is removed in mature form.

The protein belongs to the small GTPase superfamily. Rho family.

It is found in the cell membrane. The protein is Rho-related protein racF2 (racF2) of Dictyostelium discoideum (Social amoeba).